The following is a 294-amino-acid chain: uncharacterized protein (294 aa).

Residues 5–25 (ILIILIIIIIVIISLIYLKNF) traverse the membrane as a helical segment. Asn-151, Asn-170, Asn-205, and Asn-271 each carry an N-linked (GlcNAc...) asparagine; by host glycan.

Its subcellular location is the membrane. This is an uncharacterized protein from Acanthamoeba polyphaga (Amoeba).